The primary structure comprises 929 residues: Leucine--tRNA ligase (929 aa).

The 'HIGH' region motif lies at 42–52 (PYPSGNLHMGH). Positions 614 to 618 (KMSKS) match the 'KMSKS' region motif. K617 contributes to the ATP binding site.

It belongs to the class-I aminoacyl-tRNA synthetase family.

The protein resides in the cytoplasm. It catalyses the reaction tRNA(Leu) + L-leucine + ATP = L-leucyl-tRNA(Leu) + AMP + diphosphate. This is Leucine--tRNA ligase from Trichodesmium erythraeum (strain IMS101).